The following is a 417-amino-acid chain: Gamma-glutamyl phosphate reductase (417 aa).

It belongs to the gamma-glutamyl phosphate reductase family.

The protein localises to the cytoplasm. It catalyses the reaction L-glutamate 5-semialdehyde + phosphate + NADP(+) = L-glutamyl 5-phosphate + NADPH + H(+). It participates in amino-acid biosynthesis; L-proline biosynthesis; L-glutamate 5-semialdehyde from L-glutamate: step 2/2. Functionally, catalyzes the NADPH-dependent reduction of L-glutamate 5-phosphate into L-glutamate 5-semialdehyde and phosphate. The product spontaneously undergoes cyclization to form 1-pyrroline-5-carboxylate. The sequence is that of Gamma-glutamyl phosphate reductase from Enterococcus faecalis (strain ATCC 700802 / V583).